A 540-amino-acid polypeptide reads, in one-letter code: Probable metabolite transport protein YFL040W (540 aa).

The Cytoplasmic segment spans residues 1-29 (MTAMKAIVWRLPKMPKIKITKTYEVTKIT). The chain crosses the membrane as a helical span at residues 30 to 50 (AILTLVGFIMGLEVPSLATFL). At 51–67 (TNKTFNEYFKYPTPLQQ) the chain is on the extracellular side. Asn-52 carries N-linked (GlcNAc...) asparagine glycosylation. Residues 68–88 (GLLMGSTPLGGIMGCFICCIM) form a helical membrane-spanning segment. Residues 89–101 (NDRFSRIYQFQSG) are Cytoplasmic-facing. A helical transmembrane segment spans residues 102 to 122 (IIIWNIVTLLNFCIWDILGLL). At 123-126 (ICRM) the chain is on the extracellular side. The helical transmembrane segment at 127 to 147 (IKGMILGNFSILVASYANEVI) threads the bilayer. Over 148–158 (PRGKRGSTMSY) the chain is Cytoplasmic. A helical transmembrane segment spans residues 159–179 (IQLCLTIGILVMHYLCIALSL). The Extracellular segment spans residues 180-187 (WDSHFAFR). A helical transmembrane segment spans residues 188 to 208 (IAWCIGIIPGLLFWMASYALP). Residues 209–275 (ESYHWLVLHG…KKLPRGSFKP (67 aa)) are Cytoplasmic-facing. The chain crosses the membrane as a helical span at residues 276-296 (LILGMTLQLLVQFSGINIILG). The Extracellular portion of the chain corresponds to 297–313 (YITYICEIVGLEGNVKL). A helical transmembrane segment spans residues 314 to 334 (FTSSIPYFINMVLSLLPITFI). At 335–341 (DYTSRKL) the chain is on the cytoplasmic side. The helical transmembrane segment at 342–362 (ITLLGGFPISGLLITIGALFV) threads the bilayer. The Extracellular segment spans residues 363-385 (KYGQDTKPIDGNRSLVWSIGENP). An N-linked (GlcNAc...) asparagine glycan is attached at Asn-374. A helical transmembrane segment spans residues 386–406 (FVGGWILTLCFLIVGIFAMSL). Residues 407 to 428 (SSIPWVYTNEMLPSRVKVKGFA) are Cytoplasmic-facing. A helical membrane pass occupies residues 429 to 449 (ICVTFGWLGNFILTFLCPVMI). Residues 450–455 (ERLKGT) lie on the Extracellular side of the membrane. A helical transmembrane segment spans residues 456–476 (TFIIFGSLTFLISLSVLIWFP). Residues 477-540 (ETKGMSIEDI…KLKSDEEMII (64 aa)) are Cytoplasmic-facing. Positions 499-540 (NLHGEKGIKTPDSNSNGGSTRSSQEGQLHKPIKLKSDEEMII) are disordered. A compositionally biased stretch (polar residues) spans 509 to 524 (PDSNSNGGSTRSSQEG).

This sequence belongs to the major facilitator superfamily. Sugar transporter (TC 2.A.1.1) family.

It is found in the membrane. In Saccharomyces cerevisiae (strain ATCC 204508 / S288c) (Baker's yeast), this protein is Probable metabolite transport protein YFL040W.